The primary structure comprises 935 residues: Protocadherin gamma-A11 (935 aa).

Residues M1–A29 form the signal peptide. 6 Cadherin domains span residues R30–F134, Q135–F243, T244–I348, T349–F453, P454–I563, and D571–G677. Residues R30–Y693 are Extracellular-facing. N-linked (GlcNAc...) asparagine glycosylation occurs at N48. N-linked (GlcNAc...) asparagine glycans are attached at residues N255, N266, N420, and N546. A helical membrane pass occupies residues L694–A714. The Cytoplasmic portion of the chain corresponds to L715–K935. Disordered stretches follow at residues C805 to N844 and A905 to K935. Over residues P807–N844 the composition is skewed to polar residues. Over residues N925–K935 the composition is skewed to basic residues.

It localises to the cell membrane. Its function is as follows. Potential calcium-dependent cell-adhesion protein. May be involved in the establishment and maintenance of specific neuronal connections in the brain. This Pan troglodytes (Chimpanzee) protein is Protocadherin gamma-A11 (PCDHGA11).